A 269-amino-acid polypeptide reads, in one-letter code: Phosphonates import ATP-binding protein PhnC (269 aa).

The ABC transporter domain maps to 2 to 245; that stretch reads LVVEGLTCRF…VARELYDLEA (244 aa). 34-41 is a binding site for ATP; sequence GRSGAGKS.

It belongs to the ABC transporter superfamily. Phosphonates importer (TC 3.A.1.9.1) family. The complex is composed of two ATP-binding proteins (PhnC), two transmembrane proteins (PhnE) and a solute-binding protein (PhnD).

It is found in the cell inner membrane. It catalyses the reaction phosphonate(out) + ATP + H2O = phosphonate(in) + ADP + phosphate + H(+). Part of the ABC transporter complex PhnCDE involved in phosphonates import. Responsible for energy coupling to the transport system. The sequence is that of Phosphonates import ATP-binding protein PhnC from Bradyrhizobium diazoefficiens (strain JCM 10833 / BCRC 13528 / IAM 13628 / NBRC 14792 / USDA 110).